A 678-amino-acid polypeptide reads, in one-letter code: Exoribonuclease 2 (678 aa).

The 329-residue stretch at 193–521 (REDLTALPFV…INHRLLKAHI (329 aa)) folds into the RNB domain. An S1 motif domain is found at 568-650 (ETRFQAEIFD…ENRSLVGKPT (83 aa)). The disordered stretch occupies residues 659 to 678 (ETQTSAEQPAEGAENNEPQV).

Belongs to the RNR ribonuclease family. RNase II subfamily.

The protein localises to the cytoplasm. It carries out the reaction Exonucleolytic cleavage in the 3'- to 5'-direction to yield nucleoside 5'-phosphates.. Functionally, involved in mRNA degradation. Hydrolyzes single-stranded polyribonucleotides processively in the 3' to 5' direction. This is Exoribonuclease 2 from Vibrio cholerae serotype O1 (strain ATCC 39315 / El Tor Inaba N16961).